A 48-amino-acid chain; its full sequence is uncharacterized protein (48 aa).

Residues I18–Y38 form a helical membrane-spanning segment.

Its subcellular location is the host membrane. This is an uncharacterized protein from Acidianus bottle-shaped virus (isolate Italy/Pozzuoli) (ABV).